A 409-amino-acid chain; its full sequence is Peptidase T (409 aa).

His78 is a Zn(2+) binding site. Residue Asp80 is part of the active site. Asp140 contacts Zn(2+). Glu173 functions as the Proton acceptor in the catalytic mechanism. 3 residues coordinate Zn(2+): Glu174, Asp196, and His379.

The protein belongs to the peptidase M20B family. It depends on Zn(2+) as a cofactor.

It is found in the cytoplasm. The catalysed reaction is Release of the N-terminal residue from a tripeptide.. Cleaves the N-terminal amino acid of tripeptides. The sequence is that of Peptidase T from Salmonella enteritidis PT4 (strain P125109).